The chain runs to 488 residues: Bifunctional protein HldE (488 aa).

Residues 1 to 332 are ribokinase; that stretch reads MRESFLDTIQ…QELQSQQSAA (332 aa). Position 208–211 (208–211) interacts with ATP; that stretch reads NKRE. Residue aspartate 277 is part of the active site. Positions 359-488 are cytidylyltransferase; the sequence is FTNGCFDLLH…TSNIIRKLAS (130 aa).

In the N-terminal section; belongs to the carbohydrate kinase PfkB family. It in the C-terminal section; belongs to the cytidylyltransferase family. As to quaternary structure, homodimer.

It catalyses the reaction D-glycero-beta-D-manno-heptose 7-phosphate + ATP = D-glycero-beta-D-manno-heptose 1,7-bisphosphate + ADP + H(+). It carries out the reaction D-glycero-beta-D-manno-heptose 1-phosphate + ATP + H(+) = ADP-D-glycero-beta-D-manno-heptose + diphosphate. Its pathway is nucleotide-sugar biosynthesis; ADP-L-glycero-beta-D-manno-heptose biosynthesis; ADP-L-glycero-beta-D-manno-heptose from D-glycero-beta-D-manno-heptose 7-phosphate: step 1/4. It functions in the pathway nucleotide-sugar biosynthesis; ADP-L-glycero-beta-D-manno-heptose biosynthesis; ADP-L-glycero-beta-D-manno-heptose from D-glycero-beta-D-manno-heptose 7-phosphate: step 3/4. Functionally, catalyzes the phosphorylation of D-glycero-D-manno-heptose 7-phosphate at the C-1 position to selectively form D-glycero-beta-D-manno-heptose-1,7-bisphosphate. Its function is as follows. Catalyzes the ADP transfer from ATP to D-glycero-beta-D-manno-heptose 1-phosphate, yielding ADP-D-glycero-beta-D-manno-heptose. The protein is Bifunctional protein HldE of Methylobacillus flagellatus (strain ATCC 51484 / DSM 6875 / VKM B-1610 / KT).